The following is a 733-amino-acid chain: Zinc finger protein indra (733 aa).

The ZAD domain maps to 17-91 (VRCDHCGTSQ…RETVDRVQEQ (75 aa)). Zn(2+) is bound by residues Cys19, Cys22, Cys64, and Cys67. Residues 90–100 (EQPAKKTKVAE) show a composition bias toward basic and acidic residues. Residues 90-121 (EQPAKKTKVAEIEEPSTQESDKKAVKVPKKNT) are disordered. 3 positions are modified to phosphoserine: Ser109, Ser153, and Ser176. Phosphothreonine is present on residues Thr180 and Thr188. C2H2-type zinc fingers lie at residues 228-251 (FQCP…QKEH) and 259-282 (YPCT…RDTH). Positions 285–316 (TFESEAKTKAKESKEKEAKSGAKNKIDAKAKE) are enriched in basic and acidic residues. Positions 285-336 (TFESEAKTKAKESKEKEAKSGAKNKIDAKAKETNAVSQRKKPKEKKSKEKKT) are disordered. 2 C2H2-type zinc fingers span residues 416-439 (FQCE…KTVH) and 447-469 (FKCH…MTLH). 2 disordered regions span residues 499–525 (IENT…FTNR) and 540–622 (AFKT…SSDV). A compositionally biased stretch (polar residues) spans 592-602 (SVSTTNGNSPA). Residues Ser600, Ser642, and Ser646 each carry the phosphoserine modification. Position 647 is a phosphothreonine (Thr647). C2H2-type zinc fingers lie at residues 653–676 (LSCD…EKKH) and 708–733 (LPCG…RKRH). Ser654 is subject to Phosphoserine.

Belongs to the krueppel C2H2-type zinc-finger protein family.

Its subcellular location is the nucleus. The protein localises to the nucleolus. In terms of biological role, required for rDNA copy number maintenance and non-random sister chromatid segregation (NRSS) following unequal sister chromatid exchange. Binds ribosomal DNA (rDNA) preferentially binding to intergenic spacers (IGS) regions on both X and Y chromosomes. Essential for NRSS, a mechanism which contributes to the recovery and maintenance of inherently unstable rDNA copy numbers so that the integrity of the germline genome is upheld over generations and germline immortality is sustained. May be involved in transcriptional regulation. The chain is Zinc finger protein indra from Drosophila melanogaster (Fruit fly).